We begin with the raw amino-acid sequence, 765 residues long: MKWSILLLVGCAAAIDVPRQPYAPTGSGKKRLTFNETVVKRAISPSAISVEWISTSEDGDYVYQDQDGSLKIQSIVTNNTQTLVPADKVPEDAYSYWIHPNLSSVLWATNYTKQYRHSYFADYFIQDVQSMNLRPLAPDQSGDIQYAQWSPTGDAIAFVRGNDVFVWTNASTSQITNDGGPDLFNGVPDWIYEEEILGDRFALWFSPDGAYLAFLRFNETGVPTFTVPYYMDNEEIAPPYPRELELRYPKVSQTNPTVELNLLELRTGERTPVPIDAFDAKELIIGEVAWLTEKHDVVAVKAFNRVQDRQKVVAVDVASLRTKTINERDGTDGWLDNLLSMAYIGPIGESKEEYYIDISDQSGWAHLWLFPVAGGEPIALTKGEWEVTAILSIDKPRQLVYFLSTKHHSTERHLYSVSWKTMEITPLVDDTVPAVWSASFSSQGGYYILSYRGPDVPYQDLYAINSTAPLRTITSNAAVLDGLKEYTLPNITYFELALPSGETLNVMQRLPVKFSSKKKYPVLFTPYGGPGAQEVSKAWQALDFKAYIASDPELEYITWTVDNRGTGYKGRAFRCQVTSRLGELEAADQVFAAQQAAKLPYVDADHIAIWGWSYGGYLTGKVIETDSGAFSLGVQTAPVSDWRFYDSMYTERYMKTLESNAAGYNASAIRKVAGYKNVRGGVLIQHGTGDDNVHFQNAAALVDTLVGAGVTPEKLQVQWFTDSDHGIRYHGGNVFLYRQLSKRLYEEKKRKEKGEAHQWSKKSVL.

A signal peptide spans 1–14 (MKWSILLLVGCAAA). Asparagine 35, asparagine 78, asparagine 101, asparagine 110, asparagine 169, asparagine 218, asparagine 465, and asparagine 490 each carry an N-linked (GlcNAc...) asparagine glycan. Catalysis depends on serine 613, which acts as the Charge relay system. A glycan (N-linked (GlcNAc...) asparagine) is linked at asparagine 665. Residues aspartate 690 and histidine 725 each act as charge relay system in the active site.

The protein belongs to the peptidase S9B family.

It is found in the secreted. It carries out the reaction Release of an N-terminal dipeptide, Xaa-Yaa-|-Zaa-, from a polypeptide, preferentially when Yaa is Pro, provided Zaa is neither Pro nor hydroxyproline.. Extracellular dipeptidyl-peptidase which removes N-terminal dipeptides sequentially from polypeptides having unsubstituted N-termini provided that the penultimate residue is proline. In Neosartorya fischeri (strain ATCC 1020 / DSM 3700 / CBS 544.65 / FGSC A1164 / JCM 1740 / NRRL 181 / WB 181) (Aspergillus fischerianus), this protein is Probable dipeptidyl peptidase 4 (dpp4).